Consider the following 206-residue polypeptide: Thymidylate kinase (206 aa).

Gly16 to Ser23 is a binding site for ATP.

Belongs to the thymidylate kinase family.

The enzyme catalyses dTMP + ATP = dTDP + ADP. Functionally, phosphorylation of dTMP to form dTDP in both de novo and salvage pathways of dTTP synthesis. The protein is Thymidylate kinase of Akkermansia muciniphila (strain ATCC BAA-835 / DSM 22959 / JCM 33894 / BCRC 81048 / CCUG 64013 / CIP 107961 / Muc).